Consider the following 234-residue polypeptide: MAERGYSFSLTTFSPSGKLVQIEYALAAVAGGAPSVGIKAANGVVLATEKKQKSILYDERSVHKVEPITKHIGLVYSGMGPDYRVLVHRARKLAQQYYLVYQEPIPTAQLVQRVASVMQEYTQSGGVRPFGVSLLICGWNEGRPYLFQSDPSGAYFAWKATAMGKNYVNGKTFLEKRYNEDLELEDAIHTAILTLKESFEGQMTEDNIEVGICNEAGFRRLTPTEVRDYLAAIA.

At A2 the chain carries N-acetylalanine. Y6 carries the phosphotyrosine modification. Residues S7, S14, and S16 each carry the phosphoserine modification. The residue at position 24 (Y24) is a Phosphotyrosine. K70 bears the N6-acetyllysine mark. 2 positions are modified to phosphotyrosine: Y76 and Y121. K171 is modified (N6-acetyllysine).

The protein belongs to the peptidase T1A family. The 26S proteasome consists of a 20S proteasome core and two 19S regulatory subunits. The 20S proteasome core is a barrel-shaped complex made of 28 subunits that are arranged in four stacked rings. The two outer rings are each formed by seven alpha subunits, and the two inner rings are formed by seven beta subunits. The proteolytic activity is exerted by three beta-subunits PSMB5, PSMB6 and PSMB7. In terms of processing, phosphorylated on tyrosine residues; which may be important for nuclear import. As to expression, detected in liver (at protein level).

It is found in the cytoplasm. The protein localises to the nucleus. Component of the 20S core proteasome complex involved in the proteolytic degradation of most intracellular proteins. This complex plays numerous essential roles within the cell by associating with different regulatory particles. Associated with two 19S regulatory particles, forms the 26S proteasome and thus participates in the ATP-dependent degradation of ubiquitinated proteins. The 26S proteasome plays a key role in the maintenance of protein homeostasis by removing misfolded or damaged proteins that could impair cellular functions, and by removing proteins whose functions are no longer required. Associated with the PA200 or PA28, the 20S proteasome mediates ubiquitin-independent protein degradation. This type of proteolysis is required in several pathways including spermatogenesis (20S-PA200 complex) or generation of a subset of MHC class I-presented antigenic peptides (20S-PA28 complex). This Mus musculus (Mouse) protein is Proteasome subunit alpha type-2 (Psma2).